Here is a 151-residue protein sequence, read N- to C-terminus: Large ribosomal subunit protein uL13 (151 aa).

Belongs to the universal ribosomal protein uL13 family. As to quaternary structure, part of the 50S ribosomal subunit.

In terms of biological role, this protein is one of the early assembly proteins of the 50S ribosomal subunit, although it is not seen to bind rRNA by itself. It is important during the early stages of 50S assembly. This chain is Large ribosomal subunit protein uL13, found in Acaryochloris marina (strain MBIC 11017).